The sequence spans 530 residues: Na(+)/H(+) antiporter NhaB (530 aa).

A run of 13 helical transmembrane segments spans residues 13-33, 34-54, 64-84, 90-110, 113-133, 136-156, 205-225, 234-254, 306-326, 351-371, 378-400, 450-470, and 481-501; these read FLGK…IINP, FVFF…EFIF, PLQP…TSPA, LVAN…IYFM, LLLY…LLSL, CLMA…AVVI, LLMH…VGEP, AGWL…PVFM, ALIA…VGLI, EEAL…AVII, PIIS…IANG, ATPN…APLI, and ALPY…FMLL.

The protein belongs to the NhaB Na(+)/H(+) (TC 2.A.34) antiporter family.

The protein resides in the cell inner membrane. It catalyses the reaction 2 Na(+)(in) + 3 H(+)(out) = 2 Na(+)(out) + 3 H(+)(in). Its function is as follows. Na(+)/H(+) antiporter that extrudes sodium in exchange for external protons. This Photobacterium profundum (strain SS9) protein is Na(+)/H(+) antiporter NhaB.